A 330-amino-acid chain; its full sequence is Ketol-acid reductoisomerase (NADP(+)) (330 aa).

The 181-residue stretch at 1-181 (MKVFYDSDFK…GLSRAGVIQT (181 aa)) folds into the KARI N-terminal Rossmann domain. NADP(+) is bound by residues 24–27 (YGSQ), arginine 47, serine 52, and 82–85 (DELQ). The active site involves histidine 107. Glycine 133 serves as a coordination point for NADP(+). Residues 182–327 (TFKEETETDL…AKLRKMCGLE (146 aa)) form the KARI C-terminal knotted domain. Positions 190, 194, 226, and 230 each coordinate Mg(2+). Serine 251 provides a ligand contact to substrate.

It belongs to the ketol-acid reductoisomerase family. The cofactor is Mg(2+).

The catalysed reaction is (2R)-2,3-dihydroxy-3-methylbutanoate + NADP(+) = (2S)-2-acetolactate + NADPH + H(+). It carries out the reaction (2R,3R)-2,3-dihydroxy-3-methylpentanoate + NADP(+) = (S)-2-ethyl-2-hydroxy-3-oxobutanoate + NADPH + H(+). It participates in amino-acid biosynthesis; L-isoleucine biosynthesis; L-isoleucine from 2-oxobutanoate: step 2/4. Its pathway is amino-acid biosynthesis; L-valine biosynthesis; L-valine from pyruvate: step 2/4. Functionally, involved in the biosynthesis of branched-chain amino acids (BCAA). Catalyzes an alkyl-migration followed by a ketol-acid reduction of (S)-2-acetolactate (S2AL) to yield (R)-2,3-dihydroxy-isovalerate. In the isomerase reaction, S2AL is rearranged via a Mg-dependent methyl migration to produce 3-hydroxy-3-methyl-2-ketobutyrate (HMKB). In the reductase reaction, this 2-ketoacid undergoes a metal-dependent reduction by NADPH to yield (R)-2,3-dihydroxy-isovalerate. The sequence is that of Ketol-acid reductoisomerase (NADP(+)) from Methanococcus maripaludis (strain C7 / ATCC BAA-1331).